A 233-amino-acid chain; its full sequence is Large ribosomal subunit protein uL22m (233 aa).

This sequence belongs to the universal ribosomal protein uL22 family. As to quaternary structure, component of the mitochondrial ribosome large subunit (39S) which comprises a 16S rRNA and about 50 distinct proteins.

The protein resides in the mitochondrion. This chain is Large ribosomal subunit protein uL22m (mRpL22), found in Drosophila melanogaster (Fruit fly).